We begin with the raw amino-acid sequence, 180 residues long: Large ribosomal subunit protein uL5 (180 aa).

It belongs to the universal ribosomal protein uL5 family. In terms of assembly, part of the 50S ribosomal subunit; part of the 5S rRNA/L5/L18/L25 subcomplex. Contacts the 5S rRNA and the P site tRNA. Forms a bridge to the 30S subunit in the 70S ribosome.

Its function is as follows. This is one of the proteins that bind and probably mediate the attachment of the 5S RNA into the large ribosomal subunit, where it forms part of the central protuberance. In the 70S ribosome it contacts protein S13 of the 30S subunit (bridge B1b), connecting the 2 subunits; this bridge is implicated in subunit movement. Contacts the P site tRNA; the 5S rRNA and some of its associated proteins might help stabilize positioning of ribosome-bound tRNAs. In Ruminiclostridium cellulolyticum (strain ATCC 35319 / DSM 5812 / JCM 6584 / H10) (Clostridium cellulolyticum), this protein is Large ribosomal subunit protein uL5.